Consider the following 31-residue polypeptide: Cytochrome b6-f complex subunit 6 (31 aa).

A helical transmembrane segment spans residues 4 to 26 (LTSYFGFLLAALTITSALFIGLS).

Belongs to the PetL family. As to quaternary structure, the 4 large subunits of the cytochrome b6-f complex are cytochrome b6, subunit IV (17 kDa polypeptide, PetD), cytochrome f and the Rieske protein, while the 4 small subunits are PetG, PetL, PetM and PetN. The complex functions as a dimer.

It is found in the plastid. It localises to the chloroplast thylakoid membrane. Component of the cytochrome b6-f complex, which mediates electron transfer between photosystem II (PSII) and photosystem I (PSI), cyclic electron flow around PSI, and state transitions. PetL is important for photoautotrophic growth as well as for electron transfer efficiency and stability of the cytochrome b6-f complex. The polypeptide is Cytochrome b6-f complex subunit 6 (Aethionema grandiflorum (Persian stone-cress)).